A 365-amino-acid polypeptide reads, in one-letter code: Poly(rC)-binding protein 2 (365 aa).

KH domains lie at 13 to 75 (TLTI…FAMI) and 97 to 162 (PVTL…VKQI). Residue Lys115 forms a Glycyl lysine isopeptide (Lys-Gly) (interchain with G-Cter in SUMO2) linkage. Phosphoserine is present on Ser173. Residue Lys185 forms a Glycyl lysine isopeptide (Lys-Gly) (interchain with G-Cter in SUMO2) linkage. 2 positions are modified to phosphoserine: Ser189 and Ser272. A KH 3 domain is found at 287–351 (TTSHELTIPN…ASISLAQYLI (65 aa)). Lys322 participates in a covalent cross-link: Glycyl lysine isopeptide (Lys-Gly) (interchain with G-Cter in SUMO2). A phosphoserine mark is found at Ser364 and Ser365.

In terms of assembly, identified in a mRNP complex, at least composed of DHX9, DDX3X, ELAVL1, HNRNPU, IGF2BP1, ILF3, PABPC1, PCBP2, PTBP2, STAU1, STAU2, SYNCRIP and YBX1. Interacts with IFIH1 and RNF135. Interacts with MAVS (via C-terminus) and ITCH (via WW domains). Interacts with CGAS; preventing the formation of liquid-like droplets in which CGAS is activated. In terms of processing, phosphorylated. The non-phosphorylated form(s) exhibited the strongest poly(rC)-binding activity. Post-translationally, (Microbial infection) Proteolytically cleaved by picornavirus proteinase 3CD. In terms of tissue distribution, detected in all tissues examined.

The protein resides in the nucleus. Its subcellular location is the cytoplasm. In terms of biological role, single-stranded nucleic acid binding protein that binds preferentially to oligo dC. Major cellular poly(rC)-binding protein. Also binds poly(rU). Acts as a negative regulator of antiviral signaling. Negatively regulates cellular antiviral responses mediated by MAVS signaling. It acts as an adapter between MAVS and the E3 ubiquitin ligase ITCH, therefore triggering MAVS ubiquitination and degradation. Negativeley regulates the cGAS-STING pathway via interaction with CGAS, preventing the formation of liquid-like droplets in which CGAS is activated. Together with PCBP1, required for erythropoiesis, possibly by regulating mRNA splicing. Its function is as follows. (Microbial infection) In case of infection by poliovirus, binds to the viral internal ribosome entry site (IRES) and stimulates the IRES-mediated translation. Also plays a role in initiation of viral RNA replication in concert with the viral protein 3CD. This is Poly(rC)-binding protein 2 from Homo sapiens (Human).